A 224-amino-acid chain; its full sequence is Large ribosomal subunit protein uL1 (224 aa).

It belongs to the universal ribosomal protein uL1 family. In terms of assembly, part of the 50S ribosomal subunit.

Binds directly to 23S rRNA. The L1 stalk is quite mobile in the ribosome, and is involved in E site tRNA release. Functionally, protein L1 is also a translational repressor protein, it controls the translation of the L11 operon by binding to its mRNA. This chain is Large ribosomal subunit protein uL1, found in Borrelia hermsii (strain HS1 / DAH).